Consider the following 329-residue polypeptide: DNA-directed RNA polymerase subunit alpha (329 aa).

The alpha N-terminal domain (alpha-NTD) stretch occupies residues methionine 1–arginine 235. The segment at phenylalanine 249–glutamate 329 is alpha C-terminal domain (alpha-CTD).

It belongs to the RNA polymerase alpha chain family. Homodimer. The RNAP catalytic core consists of 2 alpha, 1 beta, 1 beta' and 1 omega subunit. When a sigma factor is associated with the core the holoenzyme is formed, which can initiate transcription.

It catalyses the reaction RNA(n) + a ribonucleoside 5'-triphosphate = RNA(n+1) + diphosphate. Its function is as follows. DNA-dependent RNA polymerase catalyzes the transcription of DNA into RNA using the four ribonucleoside triphosphates as substrates. This is DNA-directed RNA polymerase subunit alpha from Buchnera aphidicola subsp. Schizaphis graminum (strain Sg).